A 250-amino-acid chain; its full sequence is Small ribosomal subunit protein uS3 (250 aa).

The 73-residue stretch at 39-111 folds into the KH type-2 domain; sequence IRTLIKNHYP…KIQINIFEVK (73 aa).

The protein belongs to the universal ribosomal protein uS3 family. As to quaternary structure, part of the 30S ribosomal subunit. Forms a tight complex with proteins S10 and S14.

Its function is as follows. Binds the lower part of the 30S subunit head. Binds mRNA in the 70S ribosome, positioning it for translation. The chain is Small ribosomal subunit protein uS3 from Elm witches'-broom phytoplasma.